A 420-amino-acid chain; its full sequence is MFSPGQEEHCAPNKEPVKYGELVVLGYNGALPNGDRGRRKSRFALYKRPKANGVKPSTVHVISTPQASKAISCKGQHSISYTLSRNQTVVVEYTHDKDTDMFQVGRSTESPIDFVVTDTISGSQNTDEAQITQSTISRFACRIVCDRNEPYTARIFAAGFDSSKNIFLGEKAAKWKNPDGHMDGLTTNGVLVMHPRGGFTEESQPGVWREISVCGDVYTLRETRSAQQRGKLVESETNVLQDGSLIDLCGATLLWRTADGLFHTPTQKHIEALRQEINAARPQCPVGLNTLAFPSINRKEVVEEKQPWAYLSCGHVHGYHNWGHRSDTEANERECPMCRTVGPYVPLWLGCEAGFYVDAGPPTHAFTPCGHVCSEKSAKYWSQIPLPHGTHAFHAACPFCATQLVGEQNCIKLIFQGPID.

The region spanning 15–202 is the FHA; atypical domain; it reads EPVKYGELVV…MHPRGGFTEE (188 aa).

This sequence belongs to the pellino family. As to quaternary structure, interacts with TRAF6, IRAK1, IRAK4 and MAP3K7. Interacts with BCL10; this interaction is impaired by SOCS3. In terms of processing, phosphorylated by IRAK1 and IRAK4 enhancing its E3 ligase activity.

The catalysed reaction is S-ubiquitinyl-[E2 ubiquitin-conjugating enzyme]-L-cysteine + [acceptor protein]-L-lysine = [E2 ubiquitin-conjugating enzyme]-L-cysteine + N(6)-ubiquitinyl-[acceptor protein]-L-lysine.. It participates in protein modification; protein ubiquitination. E3 ubiquitin ligase catalyzing the covalent attachment of ubiquitin moieties onto substrate proteins. Involved in the TLR and IL-1 signaling pathways via interaction with the complex containing IRAK kinases and TRAF6. Mediates IL1B-induced IRAK1 'Lys-63'-linked polyubiquitination and possibly 'Lys-48'-linked ubiquitination. May be important for LPS- and IL1B-induced MAP3K7-dependent, but not MAP3K3-dependent, NF-kappa-B activation. Can activate the MAP (mitogen activated protein) kinase pathway leading to activation of ELK1. The chain is E3 ubiquitin-protein ligase pellino homolog 2 (PELI2) from Homo sapiens (Human).